We begin with the raw amino-acid sequence, 200 residues long: MARCKS-related protein (200 aa).

Positions 1–200 (MGSQSSKAPR…PTPASAEQNE (200 aa)) are disordered. Gly2 carries the N-myristoyl glycine lipid modification. Thr14 carries the phosphothreonine modification. The segment covering 16–26 (EEAAGASPAKA) has biased composition (low complexity). A phosphoserine mark is found at Ser22, Ser36, and Ser48. The segment covering 53–64 (GTDEAAGATGDA) has biased composition (low complexity). Ser71 carries the post-translational modification Phosphoserine. Residues 74 to 85 (AEAKGEVAPKET) are compositionally biased toward basic and acidic residues. Residue Thr85 is modified to Phosphothreonine. Positions 86 to 98 (PKKKKKFSFKKPF) are enriched in basic residues. The segment at 87-110 (KKKKKFSFKKPFKLSGLSFKRNRK) is effector domain involved in lipid-binding and calmodulin-binding. Phosphoserine; by PKC is present on residues Ser93, Ser101, and Ser104. Ser119 carries the post-translational modification Phosphoserine. The residue at position 120 (Ser120) is a Phosphoserine; by MAPK8. Phosphoserine occurs at positions 132 and 135. Residue Thr148 is modified to Phosphothreonine; by MAPK8. A phosphoserine mark is found at Ser151, Ser162, and Ser165. Residues 156 to 165 (AKGAEASAAS) show a composition bias toward low complexity. Phosphothreonine is present on Thr170. Over residues 178–200 (AAEPSTPSGPESGPTPASAEQNE) the composition is skewed to low complexity. Position 183 is a phosphothreonine; by MAPK8 (Thr183). The residue at position 192 (Thr192) is a Phosphothreonine.

Belongs to the MARCKS family. In terms of assembly, binds to filamentous actin (F-actin), but not to monomeric G-actin, independently of its phosphorylation status. Interacts with calmodulin. Phosphorylated. Phosphorylation at Ser-120 and Thr-183 is non-redundantly catalyzed by MAPK8 in vivo. Phosphorylation at Thr-148 is preferentially catalyzed by MAPK8 in vivo, but this modification can also be catalyzed by other kinases in the absence of MAPK8. May be phosphorylated by protein kinase C, which disrupts the interaction with calmodulin. In terms of tissue distribution, expressed at high levels in brain cortex and hippocampus, including dentate gyrus, anterior olfactory nucleus, primary olfactory cortex, entorhinal cortex, medial preoptic area and dorsomedial hypothalamic nucleus (at protein level). Expressed in neuronal cells (at protein level). Detected in the retina. Strongly expressed in testis and uterus; expressed at lower levels in cerebellum, cerebrum, adipose tissue, spleen, kidney, thyroid, liver, lung, skeletal muscle and heart. Detected in T-cells and B-cells.

The protein localises to the cytoplasm. It localises to the cytoskeleton. Its subcellular location is the cell membrane. In terms of biological role, involved in the control of cell movement by regulating actin cytoskeleton homeostasis and filopodium and lamellipodium formation. When unphosphorylated, induces cell migration. When phosphorylated by MAPK8, induces actin bundles formation and stabilization, thereby reducing actin plasticity, hence restricting cell movement, including neuronal migration. May be involved in coupling the protein kinase C and calmodulin signal transduction systems. The protein is MARCKS-related protein (Marcksl1) of Mus musculus (Mouse).